The primary structure comprises 233 residues: Pyridoxal phosphate homeostasis protein (233 aa).

Lys35 carries the post-translational modification N6-(pyridoxal phosphate)lysine.

This sequence belongs to the pyridoxal phosphate-binding protein YggS/PROSC family.

In terms of biological role, pyridoxal 5'-phosphate (PLP)-binding protein, which is involved in PLP homeostasis. In Pasteurella multocida (strain Pm70), this protein is Pyridoxal phosphate homeostasis protein.